Here is a 338-residue protein sequence, read N- to C-terminus: Lipoate-protein ligase A (338 aa).

The BPL/LPL catalytic domain maps to 29 to 216 (PATQRVLFLW…AFFAHYGERV (188 aa)). ATP-binding positions include R71, 76–79 (GAVF), and K134. (R)-lipoate is bound at residue K134.

Belongs to the LplA family. In terms of assembly, monomer.

It localises to the cytoplasm. It carries out the reaction L-lysyl-[lipoyl-carrier protein] + (R)-lipoate + ATP = N(6)-[(R)-lipoyl]-L-lysyl-[lipoyl-carrier protein] + AMP + diphosphate + H(+). It functions in the pathway protein modification; protein lipoylation via exogenous pathway; protein N(6)-(lipoyl)lysine from lipoate: step 1/2. The protein operates within protein modification; protein lipoylation via exogenous pathway; protein N(6)-(lipoyl)lysine from lipoate: step 2/2. Catalyzes both the ATP-dependent activation of exogenously supplied lipoate to lipoyl-AMP and the transfer of the activated lipoyl onto the lipoyl domains of lipoate-dependent enzymes. This chain is Lipoate-protein ligase A, found in Salmonella typhimurium (strain LT2 / SGSC1412 / ATCC 700720).